The sequence spans 111 residues: uncharacterized protein (111 aa).

The helical transmembrane segment at 20–39 (PVDTTGLIFFAVFASSFVLY) threads the bilayer.

It is found in the membrane. This is an uncharacterized protein from Saccharomyces cerevisiae (strain ATCC 204508 / S288c) (Baker's yeast).